The following is a 932-amino-acid chain: MAAQPRGGDYRGFFLLSILLGTPWEAWAGRILYSVSEETDKGSFVGDIAKDLGLEPRELAERGVRIISRGRTQLFALNQRSGSLVTAGRIDREEICAQSARCLVNFNILMEDKMNLYPIDVEIIDINDNVPRFLTEEINVKIMENTAPGVRFPLSEAGDPDVGTNSLQSYQLSPNRHFSLAVQSGDDETKYPELVLERVLDREEERVHHLVLTASDGGDPPRSSTAHIQVTVVDVNDHTPVFSLPQYQVTVPENVPVGTRLLTVHAIDLDEGVNGEVTYSFRKITPKLPKMFHLNSLTGEISTLEGLDYEETAFYEMEVQAQDGPGSLTKAKVLITVLDVNDNAPEVTMTSLSSSIPEDTPLGTVIALFYLQDRDSGKNGEVTCTIPENLPFKLEKSIDNYYRLVTTKNLDRETLSLYNITLKATDGGTPPLSRETHIFMQVADTNDNPPTFPHSSYSVYIAENNPRGASIFLVTAQDHDSEDNAQITYSLAEDTIQGAPVSSYVSINSDTGVLYALQSFDYEQLRELQLRVTAHDSGDPPLSSNMSLSLFVLDQNDNPPEILYPALPTDGSTGMELAPRSAEPGYLVTKVVAVDKDSGQNAWLSYLLLKASEPGLFAVGLYTGEVRTARALLDRDALKQSLVVAVQDHGQPPLSATVTLTVAVADSIPEVLADLGSLEPSDGPYNYDLTLYLVVAVATVSCVFLAFVLVLLALRLRRWHKSRLLQASEGGLANVPTSHFVGMDGVQAFLQTYSHEVSLTADSRKSHLIFPQPNYVDMLISQESCEKNDSLLTSVDFQECKENLPSIQQAPPNTDWRFSQAQRPGTSGSQNGDDTGTWPNNQFDTEMLQAMILASASEAADGSSTLGGGAGTMGLSARYGPQFTLQHVPDYRQNVYIPGSNATLTNAAGKRDGKAPAGGNGNKKKSGKKEKK.

The N-terminal stretch at 1 to 28 (MAAQPRGGDYRGFFLLSILLGTPWEAWA) is a signal peptide. Cadherin domains lie at 29–133 (GRIL…VPRF), 134–242 (LTEE…TPVF), 243–347 (SLPQ…APEV), 348–452 (TMTS…PPTF), 453–562 (PHSS…PPEI), and 570–682 (DGST…EPSD). Topologically, residues 29-692 (GRILYSVSEE…GPYNYDLTLY (664 aa)) are extracellular. N-linked (GlcNAc...) asparagine glycosylation is found at Asn-419 and Asn-545. The helical transmembrane segment at 693–713 (LVVAVATVSCVFLAFVLVLLA) threads the bilayer. Over 714–932 (LRLRRWHKSR…KKKSGKKEKK (219 aa)) the chain is Cytoplasmic. Disordered stretches follow at residues 805 to 841 (PSIQ…WPNN) and 902 to 932 (ATLT…KEKK). A compositionally biased stretch (basic residues) spans 922–932 (NKKKSGKKEKK).

It is found in the cell membrane. Its function is as follows. Potential calcium-dependent cell-adhesion protein. May be involved in the establishment and maintenance of specific neuronal connections in the brain. This is Protocadherin gamma-A7 (PCDHGA7) from Homo sapiens (Human).